The primary structure comprises 157 residues: 6,7-dimethyl-8-ribityllumazine synthase 2 (157 aa).

5-amino-6-(D-ribitylamino)uracil contacts are provided by residues Trp-21, 55-57 (AYE), and 79-81 (FVV). Arg-87 functions as the Proton donor in the catalytic mechanism. Ser-112 is a 5-amino-6-(D-ribitylamino)uracil binding site. Residue His-126 participates in (2S)-2-hydroxy-3-oxobutyl phosphate binding.

The protein belongs to the DMRL synthase family. Homodecamer, arranged as a dimer of pentamers.

The catalysed reaction is (2S)-2-hydroxy-3-oxobutyl phosphate + 5-amino-6-(D-ribitylamino)uracil = 6,7-dimethyl-8-(1-D-ribityl)lumazine + phosphate + 2 H2O + H(+). Its pathway is cofactor biosynthesis; riboflavin biosynthesis; riboflavin from 2-hydroxy-3-oxobutyl phosphate and 5-amino-6-(D-ribitylamino)uracil: step 1/2. In terms of biological role, catalyzes the formation of 6,7-dimethyl-8-ribityllumazine by condensation of 5-amino-6-(D-ribitylamino)uracil with 3,4-dihydroxy-2-butanone 4-phosphate. This is the penultimate step in the biosynthesis of riboflavin. In Mesorhizobium japonicum (strain LMG 29417 / CECT 9101 / MAFF 303099) (Mesorhizobium loti (strain MAFF 303099)), this protein is 6,7-dimethyl-8-ribityllumazine synthase 2 (ribH2).